Reading from the N-terminus, the 347-residue chain is Phenylalanine--tRNA ligase alpha subunit (347 aa).

A Mg(2+)-binding site is contributed by glutamate 265.

It belongs to the class-II aminoacyl-tRNA synthetase family. Phe-tRNA synthetase alpha subunit type 1 subfamily. Tetramer of two alpha and two beta subunits. Mg(2+) serves as cofactor.

It is found in the cytoplasm. The enzyme catalyses tRNA(Phe) + L-phenylalanine + ATP = L-phenylalanyl-tRNA(Phe) + AMP + diphosphate + H(+). This chain is Phenylalanine--tRNA ligase alpha subunit, found in Wolbachia pipientis subsp. Culex pipiens (strain wPip).